Consider the following 397-residue polypeptide: Elongation factor Tu (397 aa).

Residues 10–206 (KPHVNIGTIG…AVDSYIPTPE (197 aa)) form the tr-type G domain. A G1 region spans residues 19 to 26 (GHVDHGKT). 19-26 (GHVDHGKT) is a GTP binding site. Mg(2+) is bound at residue Thr26. The G2 stretch occupies residues 60-64 (GITIN). The G3 stretch occupies residues 81-84 (DCPG). GTP contacts are provided by residues 81–85 (DCPGH) and 136–139 (NKAD). A G4 region spans residues 136–139 (NKAD). The interval 174–176 (SAL) is G5.

The protein belongs to the TRAFAC class translation factor GTPase superfamily. Classic translation factor GTPase family. EF-Tu/EF-1A subfamily. As to quaternary structure, monomer.

It localises to the cytoplasm. It catalyses the reaction GTP + H2O = GDP + phosphate + H(+). GTP hydrolase that promotes the GTP-dependent binding of aminoacyl-tRNA to the A-site of ribosomes during protein biosynthesis. This Clostridium perfringens (strain ATCC 13124 / DSM 756 / JCM 1290 / NCIMB 6125 / NCTC 8237 / Type A) protein is Elongation factor Tu.